The chain runs to 754 residues: MATAQSNSPRVFCIGTADTKFDELRFLSEHVRSSLNSFSNKSSFKVGVTVVDVSTSRKETNSCADFDFVPSKDVLSCYARGEGTVGRFPDIRGQAIAIMNKALETFLSKANGEQNLAGVIGLGGSGGTSLLSSAFRSLPIGIPKVIISTVASGQTESYIGTSDLVLFPSVVDICGINNVSKVVLSNAGAAFAGMVIGRLESSKEHSITNGKFTVGVTMFGVTTPCVNAVKERLVKEGYETLVFHATGVGGRAMEDLVRGGFIQGVLDITTTEVADYVVGGVMACDSSRFDAILEKKIPLVLSVGALDMVNFGPKTTIPPEFQQRKIHQHNEQVSLMHTTVGENKKFAAFIAEKLNKASSSVCVCLPEKGVSALDAPGKDFYDPEATSCLTHELQMLLENNERCQVKVYPYHINDVEFANALVDSFLEMSPKSGHVECQTAESKSIQGIQNVNAVLEKYPSCNGKNFSRLNDFPNAKPETLQKRIVILQKLKDQISKGKPIIGAGAGTGISAKFEEAGGVDLIVLYNSGRFRMAGRGSLAGLLPFADANAIVLEMANEVLPVVKEVAVLAGVCATDPFRRMDNFLKQLESVGFCGVQNFPTVGLFDGNFRQNLEETGMGYGLEVEMIATAHRMGLLTTPYAFCPDEAVAMAEAGADIIVAHMGLTTSGSIGAKTAVSLEESVTCVQAIADATHRINPDAIVLCHGGPISSPEEAAYVLKRTTGVHGFYGASSMERLPVEQAITATVQQYKSISME.

The tract at residues 1 to 201 (MATAQSNSPR…AGMVIGRLES (201 aa)) is N-terminal inhibitory domain NN. Residues 18-20 (DTK), T55, R92, and 124-127 (GSGG) each bind ATP. Residues 211 to 431 (KFTVGVTMFG…VDSFLEMSPK (221 aa)) are N-terminal inhibitory domain NC.

Belongs to the UPF0261 family. As to quaternary structure, homodimer. In terms of assembly, (Microbial infection) Binds, via an ATP bridge, to the tobamoviruses avirulent (Avr) replication proteins (large and small subunits, e.g. tobacco mild green mosaic virus (TMGMV) AC P18339 and pepper mild mottle virus (PMMoV) AC P89657) to inhibit their function after the translation of tobamoviruses RNA, but before the viral replication complex formation on the membrane surfaces; this interaction is not possible with resistance-breaking strains replication proteins.

Its function is as follows. Inhibitor of viral RNA replication which confers resistance to some tobamoviruses including tobacco mild green mosaic virus (TMGMV) and pepper mild mottle virus (PMMoV), but not to tomato mosaic virus (ToMV strains L, ToMV0 and ToMV1-2) and tobacco mosaic virus (TMV). Prevents tobamoviruses RNA replication by affecting the association of tobamoviruses replication proteins (large and small subunits) with host membrane-associated proteins (e.g. TOM1, TOM2A and ARL8), thus inhibiting the replication complex formation on the membranes and avoiding viral negative-strand RNA synthesis. This chain is ToMV susceptible protein tm-1(GCR26), found in Solanum lycopersicum (Tomato).